Here is a 300-residue protein sequence, read N- to C-terminus: Ornithine carbamoyltransferase (300 aa).

Residues 50 to 53 (STRT), glutamine 77, arginine 101, and 128 to 131 (HPCQ) each bind carbamoyl phosphate. Residues asparagine 159, aspartate 219, and 223 to 224 (SM) contribute to the L-ornithine site. Carbamoyl phosphate is bound by residues 257-258 (CL) and arginine 285.

It belongs to the aspartate/ornithine carbamoyltransferase superfamily. OTCase family.

It localises to the cytoplasm. The enzyme catalyses carbamoyl phosphate + L-ornithine = L-citrulline + phosphate + H(+). The protein operates within amino-acid degradation; L-arginine degradation via ADI pathway; carbamoyl phosphate from L-arginine: step 2/2. In terms of biological role, reversibly catalyzes the transfer of the carbamoyl group from carbamoyl phosphate (CP) to the N(epsilon) atom of ornithine (ORN) to produce L-citrulline. The chain is Ornithine carbamoyltransferase from Haloquadratum walsbyi (strain DSM 16790 / HBSQ001).